The primary structure comprises 228 residues: Peroxiredoxin-like 2C (228 aa).

The tract at residues 1-22 is disordered; sequence MAAPSEAPVTRQVSGHAAPAPV. Low complexity predominate over residues 13–22; that stretch reads VSGHAAPAPV.

It belongs to the peroxiredoxin-like PRXL2 family. PRXL2C subfamily.

May positively regulate ERK1/2 signaling and AKT1 activation leading to HIF1A up-regulation with an increased expression of glycolysis genes and enhanced glycolysis. The sequence is that of Peroxiredoxin-like 2C (PRXL2C) from Bos taurus (Bovine).